The following is a 373-amino-acid chain: Glutamine synthetase (373 aa).

Ala2 carries the post-translational modification N-acetylalanine. A required for glutamine-induced ubiquitination by CRL4(CRBN) and proteasomal degradation region spans residues Ala2–Lys25. N6-acetyllysine is present on residues Lys11 and Lys14. Positions Glu24–Arg106 constitute a GS beta-grasp domain. A Phosphotyrosine modification is found at Tyr104. The 261-residue stretch at Leu113–Asn373 folds into the GS catalytic domain. An ATP-binding site is contributed by Glu134. Residues Glu134, Glu136, Glu196, and Glu203 each coordinate Mn(2+). Residue Glu203–Pro208 participates in ATP binding. Position 246–247 (Asn246–Trp247) interacts with L-glutamate. His253 lines the Mn(2+) pocket. ATP contacts are provided by residues Asn255 to Ser257, Arg319, and Arg324. Arg319 provides a ligand contact to L-glutamate. Tyr336–Glu338 provides a ligand contact to ADP. A Mn(2+)-binding site is contributed by Glu338. Arg340 contacts L-glutamate. Position 343 is a phosphoserine (Ser343).

It belongs to the glutamine synthetase family. In terms of assembly, decamer; composed of two pentamers. Interacts with PALMD. Interacts with RHOJ. Interacts with BEST2; this interaction tethers a fraction of GLUL to the membrane, causing a decrease of cytosolic glutamine synthase (GS) activity and inhibits the chloride channel activity of BEST2 by affecting the gating at the aperture in the absence of intracellular glutamate. Mg(2+) is required as a cofactor. It depends on Mn(2+) as a cofactor. Post-translationally, palmitoylated; undergoes autopalmitoylation. Acetylated by EP300/p300; acetylation is stimulated by increased glutamine levels and promotes ubiquitin-mediated proteasomal degradation. In terms of processing, ubiquitinated by ZNRF1. Ubiquitinated by the DCX (DDB1-CUL4-X-box) E3 ubiquitin-protein ligase complex called CRL4(CRBN), leading to proteasomal degradation. In the adult liver, expression is restricted to a small population of hepatocytes which form only a small rim of one to three hepatocytes around the central veins. Expressed in lung microvascular endothelial cells.

The protein localises to the cytoplasm. It is found in the cytosol. The protein resides in the microsome. It localises to the mitochondrion. Its subcellular location is the cell membrane. It catalyses the reaction L-glutamate + NH4(+) + ATP = L-glutamine + ADP + phosphate + H(+). The enzyme catalyses L-cysteinyl-[protein] + hexadecanoyl-CoA = S-hexadecanoyl-L-cysteinyl-[protein] + CoA. Its activity is regulated as follows. Glutamine synthetase activity is inhibited by methionine sulfoximine (MSO). Its function is as follows. Glutamine synthetase that catalyzes the ATP-dependent conversion of glutamate and ammonia to glutamine. Its role depends on tissue localization: in the brain, it regulates the levels of toxic ammonia and converts neurotoxic glutamate to harmless glutamine, whereas in the liver, it is one of the enzymes responsible for the removal of ammonia. Plays a key role in ammonium detoxification during erythropoiesis: the glutamine synthetase activity is required to remove ammonium generated by porphobilinogen deaminase (HMBS) during heme biosynthesis to prevent ammonium accumulation and oxidative stress. Essential for proliferation of fetal skin fibroblasts. Independently of its glutamine synthetase activity, required for endothelial cell migration during vascular development. Involved in angiogenesis by regulating membrane localization and activation of the GTPase RHOJ, possibly by promoting RHOJ palmitoylation. May act as a palmitoyltransferase for RHOJ: able to autopalmitoylate and then transfer the palmitoyl group to RHOJ. Plays a role in ribosomal 40S subunit biogenesis. Through the interaction with BEST2, inhibits BEST2 channel activity by affecting the gating at the aperture in the absence of intracellular L-glutamate, but sensitizes BEST2 to intracellular L-glutamate, which promotes the opening of BEST2 and thus relieves its inhibitory effect on BEST2. This is Glutamine synthetase from Rattus norvegicus (Rat).